A 552-amino-acid polypeptide reads, in one-letter code: L-ascorbate oxidase (552 aa).

2 Plastocyanin-like domains span residues 1-122 (SQIR…LIVD) and 134-300 (DGEI…NYLP). 3 disulfide bridges follow: Cys-19-Cys-201, Cys-81-Cys-538, and Cys-180-Cys-193. The Cu cation site is built by His-60 and His-62. An N-linked (GlcNAc...) asparagine glycan is attached at Asn-92. Cu cation is bound by residues His-104 and His-106. N-linked (GlcNAc...) asparagine glycans are attached at residues Asn-325 and Asn-440. The Plastocyanin-like 3 domain occupies 344–523 (NRRIFLLNTQ…HMGMGVVFAE (180 aa)). Cu cation-binding residues include His-445, His-448, His-450, His-506, Cys-507, His-508, His-512, and Met-517.

The protein belongs to the multicopper oxidase family. In terms of assembly, dimer. Requires Cu cation as cofactor.

Its subcellular location is the secreted. The enzyme catalyses 4 L-ascorbate + O2 = 4 monodehydro-L-ascorbate radical + 2 H2O. Functionally, may be involved in a redox system involving ascorbic acid. In Cucurbita pepo var. melopepo (Zucchini), this protein is L-ascorbate oxidase.